The chain runs to 198 residues: ATP synthase protein MI25 (198 aa).

A helical membrane pass occupies residues 29-49 (ISIYNEEMIVALCFIGFIIFS).

Belongs to the ATPase protein MI25 family. F-type ATPases have 2 components, CF(1) - the catalytic core - and CF(0) - the membrane proton channel. CF(1) has five subunits: alpha(3), beta(3), gamma(1), delta(1), epsilon(1). CF(0) has three main subunits: a, b and c.

Its subcellular location is the mitochondrion membrane. This is one of the chains of the nonenzymatic component (CF(0) subunit) of the mitochondrial ATPase complex. This chain is ATP synthase protein MI25, found in Nicotiana tabacum (Common tobacco).